The sequence spans 307 residues: UDP-N-acetylenolpyruvoylglucosamine reductase (307 aa).

In terms of domain architecture, FAD-binding PCMH-type spans 33-197 (TGGNADFYIT…LEAAFTLAPG (165 aa)). Residue R176 is part of the active site. The active-site Proton donor is the S226. The active site involves E296.

This sequence belongs to the MurB family. Requires FAD as cofactor.

The protein resides in the cytoplasm. It catalyses the reaction UDP-N-acetyl-alpha-D-muramate + NADP(+) = UDP-N-acetyl-3-O-(1-carboxyvinyl)-alpha-D-glucosamine + NADPH + H(+). It participates in cell wall biogenesis; peptidoglycan biosynthesis. Its function is as follows. Cell wall formation. This is UDP-N-acetylenolpyruvoylglucosamine reductase from Staphylococcus aureus (strain MRSA252).